The chain runs to 310 residues: Vomeronasal type-1 receptor 53 (310 aa).

Topologically, residues 1–20 are extracellular; it reads MNKANLLHTDINLKITLFSE. A helical membrane pass occupies residues 21 to 41; the sequence is VSVGISANSILIFAHLCMLLG. The Cytoplasmic portion of the chain corresponds to 42–50; the sequence is ENRPKPIDL. The chain crosses the membrane as a helical span at residues 51 to 71; that stretch reads YIAFFSLTQLMLLITMGLIAV. The Extracellular segment spans residues 72–93; that stretch reads DMFMPWGRWDSTTCQSLIYLHR. Cys-85 and Cys-172 are oxidised to a cystine. Residues 94–114 form a helical membrane-spanning segment; the sequence is LLRGLTLSATCLLNVLWTITL. At 115-134 the chain is on the cytoplasmic side; that stretch reads SPRSSCLTKFKHKSLQHISC. A helical membrane pass occupies residues 135–155; sequence AFLFLCVLYMSFNSHLFISII. Residues 156-183 lie on the Extracellular side of the membrane; it reads AYPNLTLENFMYVTQSCSLIPLSYFRKS. N-linked (GlcNAc...) asparagine glycosylation occurs at Asn-159. A helical membrane pass occupies residues 184-204; the sequence is MFSIPMAIREALLIGLMALSG. Residues 205 to 238 are Cytoplasmic-facing; it reads GYMVAHLWRHKKQAQHLHRTSLSSKASPEQRATR. A helical membrane pass occupies residues 239 to 259; that stretch reads TIMLLMSFFVVLYILDLVIFH. Residues 260-268 lie on the Extracellular side of the membrane; it reads SRMKFKDGS. Residues 269 to 289 traverse the membrane as a helical segment; sequence ILYGVQIIVSHSYATVSPFVF. The Cytoplasmic portion of the chain corresponds to 290-310; it reads ICTEKRITNFLRSMCGRIVNI.

Belongs to the G-protein coupled receptor 1 family.

The protein resides in the cell membrane. Functionally, putative pheromone receptor implicated in the regulation of social and reproductive behavior. The protein is Vomeronasal type-1 receptor 53 (Vmn1r53) of Mus musculus (Mouse).